The following is a 343-amino-acid chain: tRNA N6-adenosine threonylcarbamoyltransferase (343 aa).

His111 and His115 together coordinate Fe cation. Substrate is bound by residues 134-138, Asp167, Gly180, and Asn276; that span reads LVSGG. Asp304 is a binding site for Fe cation.

It belongs to the KAE1 / TsaD family. Fe(2+) serves as cofactor.

The protein resides in the cytoplasm. The catalysed reaction is L-threonylcarbamoyladenylate + adenosine(37) in tRNA = N(6)-L-threonylcarbamoyladenosine(37) in tRNA + AMP + H(+). In terms of biological role, required for the formation of a threonylcarbamoyl group on adenosine at position 37 (t(6)A37) in tRNAs that read codons beginning with adenine. Is involved in the transfer of the threonylcarbamoyl moiety of threonylcarbamoyl-AMP (TC-AMP) to the N6 group of A37, together with TsaE and TsaB. TsaD likely plays a direct catalytic role in this reaction. This is tRNA N6-adenosine threonylcarbamoyltransferase from Chromohalobacter salexigens (strain ATCC BAA-138 / DSM 3043 / CIP 106854 / NCIMB 13768 / 1H11).